The chain runs to 283 residues: MRIIDSVADMQAFSRDARRSGKTIALVPTMGYLHDGHASLMREGRTRADILVVSIFVNPTQFGPNEDFTTYPRDLERDLQVAEAAGADVIFAPRADDMYPAGFQTYVDVEKVTLPLCGASRPGHFRGVTTVVAKLFNIVMPHTAFFGKKDFQQLAVIRRMVADLNMDLSIVGMPIIREPDGLAMSSRNAYLGPQERTNALCLNRSLAAARTLFTDGERSVARLRDTVLRILTEVPGAAIDYADFRDSETLEPVEAANEKTLLALAVKIGTTRLIDNCVLGEEQ.

30–37 (MGYLHDGH) contributes to the ATP binding site. Histidine 37 serves as the catalytic Proton donor. Glutamine 61 serves as a coordination point for (R)-pantoate. Glutamine 61 lines the beta-alanine pocket. Residue 147-150 (GKKD) coordinates ATP. Glutamine 153 serves as a coordination point for (R)-pantoate. Residues isoleucine 176 and 184–187 (MSSR) each bind ATP.

This sequence belongs to the pantothenate synthetase family. As to quaternary structure, homodimer.

It is found in the cytoplasm. The catalysed reaction is (R)-pantoate + beta-alanine + ATP = (R)-pantothenate + AMP + diphosphate + H(+). The protein operates within cofactor biosynthesis; (R)-pantothenate biosynthesis; (R)-pantothenate from (R)-pantoate and beta-alanine: step 1/1. Its function is as follows. Catalyzes the condensation of pantoate with beta-alanine in an ATP-dependent reaction via a pantoyl-adenylate intermediate. The polypeptide is Pantothenate synthetase (Geobacter sulfurreducens (strain ATCC 51573 / DSM 12127 / PCA)).